The chain runs to 154 residues: Transcriptional repressor NrdR (154 aa).

Residues 3 to 34 fold into a zinc finger; it reads CPFCRHPDSRVVDSRETDEGQAIRRRRSCPEC. Residues 46-136 enclose the ATP-cone domain; that stretch reads LAVVKRSGVT…VYRSFSSAED (91 aa).

Belongs to the NrdR family. The cofactor is Zn(2+).

In terms of biological role, negatively regulates transcription of bacterial ribonucleotide reductase nrd genes and operons by binding to NrdR-boxes. The sequence is that of Transcriptional repressor NrdR from Mycolicibacterium gilvum (strain PYR-GCK) (Mycobacterium gilvum (strain PYR-GCK)).